Consider the following 348-residue polypeptide: Probable protein phosphatase 2C 35 (348 aa).

Residues 11–24 are compositionally biased toward low complexity; the sequence is RYPSSSSDGDSRGP. Positions 11–40 are disordered; sequence RYPSSSSDGDSRGPLEANGVLKGKDQKPLG. The PPM-type phosphatase domain maps to 52 to 342; it reads VYSVLSQRGY…DDITIIIVQI (291 aa). 4 residues coordinate Mn(2+): Asp93, Gly94, Asp289, and Asp333.

It belongs to the PP2C family. Mg(2+) serves as cofactor. Requires Mn(2+) as cofactor.

The catalysed reaction is O-phospho-L-seryl-[protein] + H2O = L-seryl-[protein] + phosphate. It carries out the reaction O-phospho-L-threonyl-[protein] + H2O = L-threonyl-[protein] + phosphate. In Arabidopsis thaliana (Mouse-ear cress), this protein is Probable protein phosphatase 2C 35.